A 402-amino-acid polypeptide reads, in one-letter code: Succinyl-diaminopimelate desuccinylase (402 aa).

H88 serves as a coordination point for Zn(2+). The active site involves D90. Position 121 (D121) interacts with Zn(2+). E155 serves as the catalytic Proton acceptor. Residues E156, E184, and H374 each coordinate Zn(2+).

This sequence belongs to the peptidase M20A family. DapE subfamily. As to quaternary structure, homodimer. Zn(2+) serves as cofactor. Co(2+) is required as a cofactor.

It carries out the reaction N-succinyl-(2S,6S)-2,6-diaminopimelate + H2O = (2S,6S)-2,6-diaminopimelate + succinate. Its pathway is amino-acid biosynthesis; L-lysine biosynthesis via DAP pathway; LL-2,6-diaminopimelate from (S)-tetrahydrodipicolinate (succinylase route): step 3/3. In terms of biological role, catalyzes the hydrolysis of N-succinyl-L,L-diaminopimelic acid (SDAP), forming succinate and LL-2,6-diaminopimelate (DAP), an intermediate involved in the bacterial biosynthesis of lysine and meso-diaminopimelic acid, an essential component of bacterial cell walls. The chain is Succinyl-diaminopimelate desuccinylase from Psychrobacter sp. (strain PRwf-1).